The sequence spans 464 residues: Non-neuronal cytoplasmic intermediate filament protein (464 aa).

Over residues M1 to T14 the composition is skewed to polar residues. The disordered stretch occupies residues M1–S59. Positions M1–E101 are head. Over residues S17–R27 the composition is skewed to gly residues. Positions A45–S59 are enriched in low complexity. Positions E98 to L413 constitute an IF rod domain. Residues L102–Q133 are coil 1A. Residues E134–L144 form a linker 1 region. Positions Y145–I237 are coil 1B. A linker 2 region spans residues R238–G264. Residues P265–L413 form a coil 2 region. The segment at F414–K464 is tail. The disordered stretch occupies residues G415–K464. Positions G420 to S438 are enriched in low complexity. Over residues G439–S448 the composition is skewed to gly residues. Residues S449–K464 show a composition bias toward low complexity.

This sequence belongs to the intermediate filament family. Can form homopolymers.

Its subcellular location is the cytoplasm. This Branchiostoma lanceolatum (Common lancelet) protein is Non-neuronal cytoplasmic intermediate filament protein.